The primary structure comprises 261 residues: WW domain-binding protein 2 (261 aa).

Positions 1 to 84 (MALNKNHSEG…YLMKDCEIKQ (84 aa)) constitute a GRAM domain. Residue Tyr-192 is modified to Phosphotyrosine. A PPxY motif 1 motif is present at residues 196 to 200 (PPPPY). The segment covering 196–209 (PPPPYPGPMEPPVS) has biased composition (pro residues). The segment at 196-261 (PPPPYPGPME…YYPPEDKKTQ (66 aa)) is disordered. A compositionally biased stretch (low complexity) spans 210–230 (GPSAPATPAAEAKAAEAAASA). Tyr-231 carries the phosphotyrosine modification. Residues 245–254 (SQPPPPPYYP) show a composition bias toward pro residues. The PPxY motif 2 motif lies at 248–252 (PPPPY).

Binds to the WW domain of YAP1, WWP1 and WWP2. Interacts with NEDD4. Interacts with ESR1 and UBE3A. Post-translationally, phosphorylated in repsonse to EGF as well as estrogen and progesterone hormones. Tyr-192 and Tyr-231 are phosphorylated by YES and SRC inducing nuclear translocation. In terms of tissue distribution, expressed in the ear and the eye. Isoform 1 is expressed in brain, inner ear and organ of Corti. Isoform 2 is only detected in brain.

Its subcellular location is the cytoplasm. The protein resides in the nucleus. Its function is as follows. Acts as a transcriptional coactivator of estrogen and progesterone receptors (ESR1 and PGR) upon hormone activation. In presence of estrogen, binds to ESR1-responsive promoters. Synergizes with YAP1 to enhance PGR activity. Modulates expression of post-synaptic scaffolding proteins via regulation of ESR1, ESR2 and PGR. The protein is WW domain-binding protein 2 (Wbp2) of Mus musculus (Mouse).